A 308-amino-acid chain; its full sequence is GTPase Era (308 aa).

Positions 7 to 181 (RCGWVALIGP…LRLIVGYMPE (175 aa)) constitute an Era-type G domain. The interval 15 to 22 (GPPNAGKS) is G1. 15–22 (GPPNAGKS) serves as a coordination point for GTP. Positions 41 to 45 (QTTRN) are G2. The interval 62–65 (DTPG) is G3. GTP is bound by residues 62 to 66 (DTPGI) and 130 to 133 (NKID). The segment at 130–133 (NKID) is G4. Positions 160–162 (ASA) are G5. The KH type-2 domain maps to 212–290 (LRQELPYSTA…HLELWVKVRE (79 aa)).

Belongs to the TRAFAC class TrmE-Era-EngA-EngB-Septin-like GTPase superfamily. Era GTPase family. As to quaternary structure, monomer.

The protein resides in the cytoplasm. It is found in the cell inner membrane. In terms of biological role, an essential GTPase that binds both GDP and GTP, with rapid nucleotide exchange. Plays a role in 16S rRNA processing and 30S ribosomal subunit biogenesis and possibly also in cell cycle regulation and energy metabolism. In Nitratidesulfovibrio vulgaris (strain DP4) (Desulfovibrio vulgaris), this protein is GTPase Era.